The primary structure comprises 167 residues: RNA pyrophosphohydrolase (167 aa).

The 151-residue stretch at 8-158 (PYRTCVGMML…KRPVYERVVK (151 aa)) folds into the Nudix hydrolase domain. Residues 47 to 68 (GGVDPGEDTWEAAKRELYEETN) carry the Nudix box motif.

This sequence belongs to the Nudix hydrolase family. RppH subfamily. Requires a divalent metal cation as cofactor.

Accelerates the degradation of transcripts by removing pyrophosphate from the 5'-end of triphosphorylated RNA, leading to a more labile monophosphorylated state that can stimulate subsequent ribonuclease cleavage. The protein is RNA pyrophosphohydrolase of Rhodopseudomonas palustris (strain HaA2).